The following is a 516-amino-acid chain: Multicopper oxidase CueO (516 aa).

Residues 1–28 (MQRRDFLKYSVALGVASALPLWSRAVFA) constitute a signal peptide (tat-type signal). 2 consecutive Plastocyanin-like domains span residues 55–165 (GQST…IEDD) and 227–292 (PRGW…DNKP). Cu cation contacts are provided by histidine 101, histidine 103, histidine 141, and histidine 143. Positions 355–400 (MDPMLDMMGMQMLMEKYGDQAMAGMDHSQMMGHMGHGNMNHMNHGG) are methionine-rich region. In terms of domain architecture, Plastocyanin-like 3 spans 402-516 (FDFHHANKIN…DTGMMLGFTV (115 aa)). Cu cation is bound by residues histidine 443, histidine 446, histidine 448, histidine 499, cysteine 500, histidine 501, and histidine 505.

It belongs to the multicopper oxidase family. In terms of assembly, monomer. It depends on Cu cation as a cofactor. Post-translationally, exported by the Tat system. The position of the signal peptide cleavage has been experimentally proven.

Its subcellular location is the periplasm. The enzyme catalyses 4 Cu(+) + O2 + 4 H(+) = 4 Cu(2+) + 2 H2O. With respect to regulation, ferroxidase and phenoloxidase activities are enhanced considerably in the presence of excess copper ions. A labile regulatory copper ion near the T1 copper site is important for the copper associated activation of enzyme activity. Ag(+) acts as a potent inhibitor of oxidase activity by binding at Cu(+) binding sites, blocking Cu(+) substrate binding and oxidation. pPD oxidase activity is strongly inhibited by sodium azide, an inhibitor of the electron transfer. Multicopper oxidase involved in copper homeostasis and copper tolerance under aerobic conditions. Is responsible for the oxidation of Cu(+) to the less harmful Cu(2+) in the periplasm, thereby preventing Cu(+) from entering the cytoplasm. Probably primarily functions as a cuprous oxidase in vivo. In terms of biological role, in vitro, in the presence of excess copper ions, exhibits ferroxidase and phenoloxidase activities. Fe(2+) is an excellent substrate in the presence of excess Cu(2+), but is inactive in the absence of Cu(2+). Oxidizes the phenolate iron siderophores enterobactin, 2,3-dihydroxybenzoate (2,3-DHB) and 3-hydroxyanthranilate (3-HAA). Oxidation and thus inactivation of enterobactin could protect cells from the interaction of enterobactin with copper and play a central role as an interface between copper detoxification and iron homeostasis. Also oxidizes a variety of phenolic model substrates, including 2,2'-azinobis(3-ethylbenzthiazolinesulfonic acid) (ABTS), p-phenylenediamine (pPD), 2,6-dimethoxyphenol (2,6-DMP) and 3,4-dihydroxybenzoic acid (3,4-DHB). The chain is Multicopper oxidase CueO from Escherichia coli (strain K12).